The sequence spans 207 residues: Myosin light chain 6B (207 aa).

The segment at 1–50 (MPPKKDAPVKKPAGPSISKPAAKSTPGTPLAKAKAEPAAPQAPAKSQEPP) is disordered. Residues 36–50 (EPAAPQAPAKSQEPP) are compositionally biased toward low complexity. EF-hand domains lie at 63 to 98 (DQLE…LGQN), 140 to 175 (GTYE…LGEK), and 175 to 207 (KMTE…ILSL).

In terms of assembly, myosin is a hexamer of 2 heavy chains and 4 light chains.

Its function is as follows. Regulatory light chain of myosin. Does not bind calcium. This is Myosin light chain 6B from Mus musculus (Mouse).